Consider the following 142-residue polypeptide: Large ribosomal subunit protein uL11 (142 aa).

This sequence belongs to the universal ribosomal protein uL11 family. Part of the ribosomal stalk of the 50S ribosomal subunit. Interacts with L10 and the large rRNA to form the base of the stalk. L10 forms an elongated spine to which L12 dimers bind in a sequential fashion forming a multimeric L10(L12)X complex. Post-translationally, one or more lysine residues are methylated.

In terms of biological role, forms part of the ribosomal stalk which helps the ribosome interact with GTP-bound translation factors. This chain is Large ribosomal subunit protein uL11, found in Shewanella piezotolerans (strain WP3 / JCM 13877).